Here is a 548-residue protein sequence, read N- to C-terminus: MSVPNKTTVLVIGGGPAGSYAAAVLARENVDTVLLEAEKFPRYHIGESMLASMRFFLRFIDLEEQFDAYGFQKKYGATFKINSKREAYTDFSASLGPGGYAWNVIRSEADDLIFRYAGEQGAHIFDGTKVDDIEFLSYDGADGANFTPAAFLVNPGRPVAATWSRKDGTRGRIKFDYLIDASGRAGIISTKYLKNRTVNEGLRNIANWSYWKGAKVYGEGSDQQGSPFFEALTDGSGWCWAIPLHNGTLSVGVVMRQDLFFGKKKAAGSPGSLEMYKLCLQSVPGISGLLEDAEIVSDVKMASDWSYSASAYAGPHFRVAGDAGCFIDPYFSSGVHLALVGGLSAATTIQAVRRGETSEFSAAKWHSSKVTEGYTRFLLVVMAVLRQLRKQNAAVITDDKEEGFDTAFGLIQPVIQGQADTGESEQQRMVAGVQFSLERFGQATPEAQRALLDKVQFAGQNAEELEKLTADELAVLHNIIGRQLKMTKVEKNLDNFTRDVIDGWAPRVERGKLGLQRADTSIMTAEMKDLFQLNRSLDSTKAGIQLPA.

FAD-binding residues include Gly-14, Ala-17, and Glu-47. Chloride-binding residues include Ser-333 and Gly-334. Residue Val-335 coordinates FAD.

This sequence belongs to the flavin-dependent halogenase family.

The enzyme catalyses sulochrin + 2 FADH2 + 2 chloride + 2 O2 = dihydrogeodin + 2 FAD + 4 H2O + H(+). It participates in secondary metabolite biosynthesis. Its function is as follows. Sulochrin halogenase; part of the gene cluster that mediates the biosynthesis of geodin, an intermediate in the biosynthesis of other natural products. The pathway begins with the synthesis of atrochrysone thioester by the polyketide synthase (PKS) gedC. The atrochrysone carboxyl ACP thioesterase gedB then breaks the thioester bond and releases the atrochrysone carboxylic acid from gedC. The atrochrysone carboxylic acid is then converted to atrochrysone which is further transformed into emodinanthrone. The next step is performed by the emodinanthrone oxygenase gedH that catalyzes the oxidation of emodinanthrone to emodin. Emodin O-methyltransferase encoded probably by gedA then catalyzes methylation of the 8-hydroxy group of emodin to form questin. Ring cleavage of questin by questin oxidase gedK leads to desmethylsulochrin via several intermediates including questin epoxide. Another methylation step probably catalyzed by methyltransferase gedG leads to the formation of sulochrin which is further converted to dihydrogeodin by the sulochrin halogenase gedL. Finally, the dihydrogeodin oxidase gedJ catalyzes the stereospecific phenol oxidative coupling reaction converting dihydrogeodin to geodin. In Aspergillus terreus (strain NIH 2624 / FGSC A1156), this protein is Sulochrin halogenase gedL.